An 85-amino-acid polypeptide reads, in one-letter code: U4-theraphotoxin-Hhn1c (85 aa).

The N-terminal stretch at 1-22 (MKVTLIAIVTCAAVLVLHTTAA) is a signal peptide. Positions 23–48 (EELEAESQLMEVGMPDTELAAVDEER) are excised as a propeptide. Disulfide bonds link Cys-52-Cys-66, Cys-56-Cys-77, and Cys-71-Cys-82.

Belongs to the neurotoxin 12 (Hwtx-2) family. 02 (Hwtx-2) subfamily. Expressed by the venom gland.

Its subcellular location is the secreted. Functionally, postsynaptic neurotoxin. In Cyriopagopus hainanus (Chinese bird spider), this protein is U4-theraphotoxin-Hhn1c.